The sequence spans 230 residues: Large ribosomal subunit protein uL1 (230 aa).

It belongs to the universal ribosomal protein uL1 family. As to quaternary structure, part of the 50S ribosomal subunit.

Binds directly to 23S rRNA. The L1 stalk is quite mobile in the ribosome, and is involved in E site tRNA release. Functionally, protein L1 is also a translational repressor protein, it controls the translation of the L11 operon by binding to its mRNA. The polypeptide is Large ribosomal subunit protein uL1 (Erythrobacter litoralis (strain HTCC2594)).